The following is a 359-amino-acid chain: Alanine racemase, biosynthetic (359 aa).

The active-site Proton acceptor; specific for D-alanine is K34. K34 bears the N6-(pyridoxal phosphate)lysine mark. R129 serves as a coordination point for substrate. Residue Y255 is the Proton acceptor; specific for L-alanine of the active site. M303 contributes to the substrate binding site.

It belongs to the alanine racemase family. In terms of assembly, monomer but homodimer in the presence of the substrate. Pyridoxal 5'-phosphate serves as cofactor.

The enzyme catalyses L-alanine = D-alanine. It participates in amino-acid biosynthesis; D-alanine biosynthesis; D-alanine from L-alanine: step 1/1. It functions in the pathway cell wall biogenesis; peptidoglycan biosynthesis. Its function is as follows. Catalyzes the interconversion of L-alanine and D-alanine. This is Alanine racemase, biosynthetic (alr) from Shigella sonnei.